A 254-amino-acid chain; its full sequence is Ribosomal RNA small subunit methyltransferase G (254 aa).

A disordered region spans residues 1 to 21 (MPEGDGVPRETPSPSVVPESP). Over residues 9 to 21 (RETPSPSVVPESP) the composition is skewed to low complexity. S-adenosyl-L-methionine contacts are provided by residues Gly-90, Leu-95, 142–143 (AE), and Arg-157. Residues 230–254 (GPLRAATAPAPPGAAKRRPGKGNRR) are disordered. A compositionally biased stretch (basic residues) spans 244–254 (AKRRPGKGNRR).

It belongs to the methyltransferase superfamily. RNA methyltransferase RsmG family.

The protein localises to the cytoplasm. Its function is as follows. Specifically methylates the N7 position of guanine in position 518 of 16S rRNA. This chain is Ribosomal RNA small subunit methyltransferase G, found in Kineococcus radiotolerans (strain ATCC BAA-149 / DSM 14245 / SRS30216).